The chain runs to 1527 residues: Lysophospholipase nte1 (1527 aa).

The Cytoplasmic portion of the chain corresponds to 1–69; sequence MADDGGPFPL…PPPAPSTMVG (69 aa). Residues 70 to 90 form a helical membrane-spanning segment; that stretch reads WIGWVFSFVFQVIPSILYWAI. Over 91-112 the chain is Lumenal; that stretch reads TFCTITLPTWLFTLFSMSLTFT. The chain crosses the membrane as a helical span at residues 113 to 133; the sequence is MNFTTLLLIALAIVSTVSWFI. Over 134 to 1527 the chain is Cytoplasmic; that stretch reads RYRFLNMYSR…RTLAPRRASI (1394 aa). 4 disordered regions span residues 240 to 259, 299 to 387, 576 to 596, and 750 to 785; these read ADHELNLAGDDSTDEEGQNV, LSSS…HPDI, EKEQSPFRPPTMRGPASPFHR, and AHGEEAFPTLKRTTTASSRTSSVAPGGSDSKRRRQS. A compositionally biased stretch (basic and acidic residues) spans 355–373; it reads HLEESRGTPDHDHQPESRT. Residues 685–804 and 846–966 each bind a nucleoside 3',5'-cyclic phosphate; these read GGTS…VGSV and RLTS…IAQR. Residues 761-771 show a composition bias toward low complexity; the sequence is RTTTASSRTSS. Residues 1224-1388 form the PNPLA domain; sequence LVLGGGGARG…IDNLTVPHMK (165 aa). The GXGXXG motif lies at 1228 to 1233; the sequence is GGGARG. The short motif at 1255 to 1259 is the GXSXG element; sequence GTSIG. Ser1257 serves as the catalytic Nucleophile. Catalysis depends on Asp1375, which acts as the Proton acceptor. Residues 1375-1377 carry the DGA/G motif; it reads DGG.

The protein belongs to the NTE family.

The protein resides in the endoplasmic reticulum membrane. It carries out the reaction a 1-acyl-sn-glycero-3-phosphocholine + H2O = sn-glycerol 3-phosphocholine + a fatty acid + H(+). Its activity is regulated as follows. Inhibited by organophosphorus esters. Its function is as follows. Intracellular phospholipase B that catalyzes the double deacylation of phosphatidylcholine (PC) to glycerophosphocholine (GroPCho). Plays an important role in membrane lipid homeostasis. Responsible for the rapid PC turnover in response to inositol, elevated temperatures, or when choline is present in the growth medium. This Aspergillus terreus (strain NIH 2624 / FGSC A1156) protein is Lysophospholipase nte1 (nte1).